Reading from the N-terminus, the 185-residue chain is Monothiol glutaredoxin-S4, mitochondrial (185 aa).

Residues 1–36 (MARLMSSALIRGLVRSSCSPTVAAVAQPTIHQFRNY) constitute a mitochondrion transit peptide. Residues 37–74 (SSGLGGDSTATGDSSSTRVAADPDTHQDFQPTTKSSNM) form a disordered region. Residues 43-53 (DSTATGDSSST) show a composition bias toward low complexity. Positions 64–74 (DFQPTTKSSNM) are enriched in polar residues. The Glutaredoxin domain occupies 77 to 179 (DDIVSQDIKE…DVLGDIAQKR (103 aa)). A glutathione-binding site is contributed by lysine 94. [2Fe-2S] cluster is bound at residue cysteine 102. Glutathione is bound by residues lysine 131, phenylalanine 143, and 156–157 (SD).

It belongs to the glutaredoxin family. CGFS subfamily.

It localises to the mitochondrion. May only reduce GSH-thiol disulfides, but not protein disulfides. In Oryza sativa subsp. japonica (Rice), this protein is Monothiol glutaredoxin-S4, mitochondrial (GRXS4).